A 249-amino-acid polypeptide reads, in one-letter code: MISLMQLQDVAETTRLGPLSGDVKPGEILHLVGPNGAGKSTLLARMAGLTFGEGTVIFDGASLETWPAAKLAQHRAYLAQQQNPPFSMPVWHFLTLHQPDKTQTNLLNDVAQALGLSDKLGRSANQLSGGEWQRVRLAAVILQIHPHANPHGQLLLLDEPMNSLDVAQQNALDRLLSQLCSQGIAIVMSSHDLNHTLRHAHRAWLLKQGKLIASGRRDEVLTPPNLAQAYGMNFRRLDVEGHRMLISTT.

Residues 5 to 233 (MQLQDVAETT…PNLAQAYGMN (229 aa)) enclose the ABC transporter domain. 33 to 40 (GPNGAGKS) is a binding site for ATP.

It belongs to the ABC transporter superfamily. Vitamin B12 importer (TC 3.A.1.13.1) family. As to quaternary structure, the complex is composed of two ATP-binding proteins (BtuD), two transmembrane proteins (BtuC) and a solute-binding protein (BtuF).

Its subcellular location is the cell inner membrane. It catalyses the reaction an R-cob(III)alamin(out) + ATP + H2O = an R-cob(III)alamin(in) + ADP + phosphate + H(+). Part of the ABC transporter complex BtuCDF involved in vitamin B12 import. Responsible for energy coupling to the transport system. The chain is Vitamin B12 import ATP-binding protein BtuD from Citrobacter koseri (strain ATCC BAA-895 / CDC 4225-83 / SGSC4696).